A 232-amino-acid chain; its full sequence is Ribose-5-phosphate isomerase A (232 aa).

Residues 31 to 34, 87 to 90, and 100 to 103 contribute to the substrate site; these read TGST, DGAD, and KGGG. The active-site Proton acceptor is the Glu-109. Lys-127 is a substrate binding site.

This sequence belongs to the ribose 5-phosphate isomerase family. As to quaternary structure, homodimer.

The catalysed reaction is aldehydo-D-ribose 5-phosphate = D-ribulose 5-phosphate. Its pathway is carbohydrate degradation; pentose phosphate pathway; D-ribose 5-phosphate from D-ribulose 5-phosphate (non-oxidative stage): step 1/1. In terms of biological role, catalyzes the reversible conversion of ribose-5-phosphate to ribulose 5-phosphate. The chain is Ribose-5-phosphate isomerase A from Bifidobacterium longum (strain DJO10A).